The following is a 340-amino-acid chain: Protein HP_1247 (340 aa).

As to quaternary structure, seems to interact with H.pylori HolB.

Functionally, could be the functional equivalent of DNA polymerase III delta subunit (HolA). This chain is Protein HP_1247, found in Helicobacter pylori (strain ATCC 700392 / 26695) (Campylobacter pylori).